The primary structure comprises 241 residues: MSVAKKNIKKYFLEQALTQVKVDEYLAYKFHSVGYSKVELQKTPMGTRVIIYAERSGAIIGRRGQTIKQITKVLEEWFGIPNPQVTVVKVEEPELDARVMAFRLANALQRGFHFRRAAYTTLRRIMGAGAIGAQVKVSGKLRGERARFEKYIAGKVYKSGNQVVRLTDRAIAHVLLKVGVEGVEVIISKKSEEERPDDEVRIKSPEEVNEIVQKIREEMQQTQPEAPTLEETVEQSGGETQ.

Residues valine 22 to glutamate 91 form the KH type-2 domain. Residues glutamate 218–glutamine 241 form a disordered region.

This sequence belongs to the universal ribosomal protein uS3 family. Part of the 30S ribosomal subunit.

Its function is as follows. Binds the lower part of the 30S subunit head. This Ignicoccus hospitalis (strain KIN4/I / DSM 18386 / JCM 14125) protein is Small ribosomal subunit protein uS3.